The following is a 259-amino-acid chain: tRNA (guanine-N(7)-)-methyltransferase (259 aa).

Positions 1–11 (MSNTDNSDKNT) are enriched in basic and acidic residues. Residues 1 to 29 (MSNTDNSDKNTKPTGYRPPQTDFNTEFGN) form a disordered region. Residues E89, E114, D141, and D164 each coordinate S-adenosyl-L-methionine. D164 is an active-site residue. Substrate is bound by residues K168, D200, and 238–241 (TKFE).

It belongs to the class I-like SAM-binding methyltransferase superfamily. TrmB family.

It carries out the reaction guanosine(46) in tRNA + S-adenosyl-L-methionine = N(7)-methylguanosine(46) in tRNA + S-adenosyl-L-homocysteine. It functions in the pathway tRNA modification; N(7)-methylguanine-tRNA biosynthesis. In terms of biological role, catalyzes the formation of N(7)-methylguanine at position 46 (m7G46) in tRNA. The protein is tRNA (guanine-N(7)-)-methyltransferase of Corynebacterium diphtheriae (strain ATCC 700971 / NCTC 13129 / Biotype gravis).